Here is a 739-residue protein sequence, read N- to C-terminus: Phosphoribosylformylglycinamidine synthase subunit PurL (739 aa).

The active site involves His-53. ATP contacts are provided by Tyr-56 and Lys-95. Glu-97 is a Mg(2+) binding site. Residues 98–101 and Arg-120 each bind substrate; that span reads SHNH. His-99 acts as the Proton acceptor in catalysis. Mg(2+) is bound at residue Asp-121. Position 244 (Gln-244) interacts with substrate. Residue Asp-274 coordinates Mg(2+). 318 to 320 is a binding site for substrate; it reads ESQ. The ATP site is built by Asp-501 and Gly-538. Residue Asn-539 participates in Mg(2+) binding. Ser-541 contributes to the substrate binding site.

The protein belongs to the FGAMS family. As to quaternary structure, monomer. Part of the FGAM synthase complex composed of 1 PurL, 1 PurQ and 2 PurS subunits.

It is found in the cytoplasm. It catalyses the reaction N(2)-formyl-N(1)-(5-phospho-beta-D-ribosyl)glycinamide + L-glutamine + ATP + H2O = 2-formamido-N(1)-(5-O-phospho-beta-D-ribosyl)acetamidine + L-glutamate + ADP + phosphate + H(+). It functions in the pathway purine metabolism; IMP biosynthesis via de novo pathway; 5-amino-1-(5-phospho-D-ribosyl)imidazole from N(2)-formyl-N(1)-(5-phospho-D-ribosyl)glycinamide: step 1/2. Part of the phosphoribosylformylglycinamidine synthase complex involved in the purines biosynthetic pathway. Catalyzes the ATP-dependent conversion of formylglycinamide ribonucleotide (FGAR) and glutamine to yield formylglycinamidine ribonucleotide (FGAM) and glutamate. The FGAM synthase complex is composed of three subunits. PurQ produces an ammonia molecule by converting glutamine to glutamate. PurL transfers the ammonia molecule to FGAR to form FGAM in an ATP-dependent manner. PurS interacts with PurQ and PurL and is thought to assist in the transfer of the ammonia molecule from PurQ to PurL. The polypeptide is Phosphoribosylformylglycinamidine synthase subunit PurL (Listeria welshimeri serovar 6b (strain ATCC 35897 / DSM 20650 / CCUG 15529 / CIP 8149 / NCTC 11857 / SLCC 5334 / V8)).